Here is a 111-residue protein sequence, read N- to C-terminus: BET1-like protein (111 aa).

Topologically, residues Met1 to Lys86 are cytoplasmic. Residues Ser9 and Ser37 each carry the phosphoserine modification. In terms of domain architecture, t-SNARE coiled-coil homology spans Glu15–Met77. Residues Leu87–Ser107 traverse the membrane as a helical; Anchor for type IV membrane protein segment. Residues Arg108 to Thr111 are Lumenal-facing.

In terms of assembly, component of a SNARE complex consisting of STX5, YKT6, GOSR1 and BET1L. Interacts with STX5.

Its subcellular location is the golgi apparatus membrane. The protein resides in the golgi apparatus. It localises to the trans-Golgi network membrane. Functionally, vesicle SNARE required for targeting and fusion of retrograde transport vesicles with the Golgi complex. Required for the integrity of the Golgi complex. The sequence is that of BET1-like protein from Pongo abelii (Sumatran orangutan).